A 473-amino-acid polypeptide reads, in one-letter code: Glutamate--tRNA ligase 2 (473 aa).

The 'HIGH' region motif lies at 11 to 21 (PSPTGYLHIGG). A compositionally biased stretch (basic and acidic residues) spans 113–133 (KARAEGRPPRYDGRWRDRDPS). The disordered stretch occupies residues 113–136 (KARAEGRPPRYDGRWRDRDPSEAP). The 'KMSKS' region motif lies at 240 to 244 (KLSKR). Lysine 243 is an ATP binding site.

It belongs to the class-I aminoacyl-tRNA synthetase family. Glutamate--tRNA ligase type 1 subfamily. In terms of assembly, monomer.

The protein localises to the cytoplasm. The enzyme catalyses tRNA(Glu) + L-glutamate + ATP = L-glutamyl-tRNA(Glu) + AMP + diphosphate. Catalyzes the attachment of glutamate to tRNA(Glu) in a two-step reaction: glutamate is first activated by ATP to form Glu-AMP and then transferred to the acceptor end of tRNA(Glu). The sequence is that of Glutamate--tRNA ligase 2 from Brucella suis biovar 1 (strain 1330).